A 401-amino-acid polypeptide reads, in one-letter code: Beta-ketoadipyl-CoA thiolase (401 aa).

Cysteine 91 functions as the Acyl-thioester intermediate in the catalytic mechanism. Active-site proton acceptor residues include histidine 357 and cysteine 387.

This sequence belongs to the thiolase-like superfamily. Thiolase family.

The catalysed reaction is succinyl-CoA + acetyl-CoA = 3-oxoadipyl-CoA + CoA. The protein operates within aromatic compound metabolism; beta-ketoadipate pathway; acetyl-CoA and succinyl-CoA from 3-oxoadipate: step 2/2. Catalyzes thiolytic cleavage of beta-ketoadipyl-CoA to succinyl-CoA and acetyl-CoA. This chain is Beta-ketoadipyl-CoA thiolase (pcaF), found in Pseudomonas aeruginosa (strain ATCC 15692 / DSM 22644 / CIP 104116 / JCM 14847 / LMG 12228 / 1C / PRS 101 / PAO1).